We begin with the raw amino-acid sequence, 474 residues long: Probable cytosol aminopeptidase (474 aa).

Mn(2+)-binding residues include Lys-237 and Asp-242. Lys-249 is a catalytic residue. 3 residues coordinate Mn(2+): Asp-260, Asp-319, and Glu-321. The active site involves Arg-323.

It belongs to the peptidase M17 family. Requires Mn(2+) as cofactor.

It localises to the cytoplasm. The catalysed reaction is Release of an N-terminal amino acid, Xaa-|-Yaa-, in which Xaa is preferably Leu, but may be other amino acids including Pro although not Arg or Lys, and Yaa may be Pro. Amino acid amides and methyl esters are also readily hydrolyzed, but rates on arylamides are exceedingly low.. It catalyses the reaction Release of an N-terminal amino acid, preferentially leucine, but not glutamic or aspartic acids.. Its function is as follows. Presumably involved in the processing and regular turnover of intracellular proteins. Catalyzes the removal of unsubstituted N-terminal amino acids from various peptides. The sequence is that of Probable cytosol aminopeptidase from Helicobacter hepaticus (strain ATCC 51449 / 3B1).